The primary structure comprises 417 residues: Serine hydroxymethyltransferase (417 aa).

Residues Leu-121 and 125–127 each bind (6S)-5,6,7,8-tetrahydrofolate; that span reads GHL. Position 230 is an N6-(pyridoxal phosphate)lysine (Lys-230). Glu-245 is a binding site for (6S)-5,6,7,8-tetrahydrofolate.

It belongs to the SHMT family. In terms of assembly, homodimer. The cofactor is pyridoxal 5'-phosphate.

The protein resides in the cytoplasm. The enzyme catalyses (6R)-5,10-methylene-5,6,7,8-tetrahydrofolate + glycine + H2O = (6S)-5,6,7,8-tetrahydrofolate + L-serine. Its pathway is one-carbon metabolism; tetrahydrofolate interconversion. It participates in amino-acid biosynthesis; glycine biosynthesis; glycine from L-serine: step 1/1. Its function is as follows. Catalyzes the reversible interconversion of serine and glycine with tetrahydrofolate (THF) serving as the one-carbon carrier. This reaction serves as the major source of one-carbon groups required for the biosynthesis of purines, thymidylate, methionine, and other important biomolecules. Also exhibits THF-independent aldolase activity toward beta-hydroxyamino acids, producing glycine and aldehydes, via a retro-aldol mechanism. This is Serine hydroxymethyltransferase from Desulfitobacterium hafniense (strain DSM 10664 / DCB-2).